Consider the following 534-residue polypeptide: Probable DNA polymerase epsilon subunit 2 (534 aa).

This sequence belongs to the DNA polymerase epsilon subunit B family. In terms of assembly, consists of four subunits.

It localises to the nucleus. Accessory component of the DNA polymerase epsilon complex. Participates in DNA repair and in chromosomal DNA replication. This chain is Probable DNA polymerase epsilon subunit 2 (pole-2), found in Caenorhabditis elegans.